A 358-amino-acid polypeptide reads, in one-letter code: Probable cinnamyl alcohol dehydrogenase (358 aa).

Residue Cys-48 participates in Zn(2+) binding. NADP(+) is bound at residue Ser-50. Residues His-70, Glu-71, Cys-101, Cys-104, Cys-107, Cys-115, and Cys-164 each coordinate Zn(2+). Residues Thr-168, 189–194, 212–217, Thr-252, Gly-276, and 299–301 contribute to the NADP(+) site; these read GLGGVG, SSSDKK, and SFV.

The protein belongs to the zinc-containing alcohol dehydrogenase family. In terms of assembly, homodimer. The cofactor is Zn(2+). In terms of tissue distribution, most actively expressed in stem, hypocotyl and root tissue.

It catalyses the reaction (E)-cinnamyl alcohol + NADP(+) = (E)-cinnamaldehyde + NADPH + H(+). The catalysed reaction is (E)-coniferol + NADP(+) = (E)-coniferaldehyde + NADPH + H(+). It carries out the reaction (E)-sinapyl alcohol + NADP(+) = (E)-sinapaldehyde + NADPH + H(+). The enzyme catalyses (E)-4-coumaroyl alcohol + NADP(+) = (E)-4-coumaraldehyde + NADPH + H(+). It catalyses the reaction (E)-caffeyl alcohol + NADP(+) = (E)-caffeyl aldehyde + NADPH + H(+). The protein operates within aromatic compound metabolism; phenylpropanoid biosynthesis. Functionally, this protein catalyzes the final step in a branch of phenylpropanoid synthesis specific for production of lignin monomers. It acts on coniferyl-, sinapyl-, 4-coumaryl- and cinnamyl-alcohol. The sequence is that of Probable cinnamyl alcohol dehydrogenase (CAD2) from Medicago sativa (Alfalfa).